Consider the following 295-residue polypeptide: Fructose-bisphosphate aldolase class 1 (295 aa).

E176 (proton acceptor) is an active-site residue. K213 functions as the Schiff-base intermediate with dihydroxyacetone-P in the catalytic mechanism.

It belongs to the class I fructose-bisphosphate aldolase family.

The catalysed reaction is beta-D-fructose 1,6-bisphosphate = D-glyceraldehyde 3-phosphate + dihydroxyacetone phosphate. Its pathway is carbohydrate degradation; glycolysis; D-glyceraldehyde 3-phosphate and glycerone phosphate from D-glucose: step 4/4. In Clostridium acetobutylicum (strain ATCC 824 / DSM 792 / JCM 1419 / IAM 19013 / LMG 5710 / NBRC 13948 / NRRL B-527 / VKM B-1787 / 2291 / W), this protein is Fructose-bisphosphate aldolase class 1.